Consider the following 178-residue polypeptide: Endothelin-2 (178 aa).

A signal peptide spans 1–24 (MPAPGVHHPNTASPFLKTVAAGKG). Positions 25-46 (QVAAAPEHPAPSARARGSHLRP) are excised as a propeptide. Cystine bridges form between Cys-49/Cys-63 and Cys-51/Cys-59. Residues 70-178 (VNTPGQTAPY…RPTHPRRRKR (109 aa)) constitute a propeptide that is removed on maturation. The endothelin-like stretch occupies residues 96–111 (CECSSGGDPACATFCH). Residues 156-178 (RFPRRPQEAGRQLRPTHPRRRKR) are disordered. Residues 169 to 178 (RPTHPRRRKR) are compositionally biased toward basic residues.

It belongs to the endothelin/sarafotoxin family.

The protein localises to the secreted. In terms of biological role, endothelins are endothelium-derived vasoconstrictor peptides. The sequence is that of Endothelin-2 (EDN2) from Canis lupus familiaris (Dog).